Here is a 418-residue protein sequence, read N- to C-terminus: F-box protein At5g03970 (418 aa).

The F-box domain maps to 18–66; the sequence is STHEVLNSNDTMCEILILLPPETIYKLILVSKRWLEIIASPCFRHTYLA.

This chain is F-box protein At5g03970, found in Arabidopsis thaliana (Mouse-ear cress).